A 398-amino-acid polypeptide reads, in one-letter code: Heat-inducible transcription repressor HrcA (398 aa).

The protein belongs to the HrcA family.

Functionally, negative regulator of class I heat shock genes (grpE-dnaK-dnaJ and groELS operons). Prevents heat-shock induction of these operons. In Chlamydia pneumoniae (Chlamydophila pneumoniae), this protein is Heat-inducible transcription repressor HrcA.